A 542-amino-acid polypeptide reads, in one-letter code: CTP synthase (542 aa).

Positions Met-1–Ile-265 are amidoligase domain. Ser-13 serves as a coordination point for CTP. Ser-13 is a binding site for UTP. Ser-14–Ile-19 contributes to the ATP binding site. Residue Tyr-54 participates in L-glutamine binding. Position 71 (Asp-71) interacts with ATP. Asp-71 and Glu-139 together coordinate Mg(2+). Residues Asp-146 to Glu-148, Lys-186 to Gln-191, and Lys-222 each bind CTP. Residues Lys-186–Gln-191 and Lys-222 each bind UTP. The Glutamine amidotransferase type-1 domain occupies Thr-291–Leu-541. L-glutamine is bound at residue Gly-353. Catalysis depends on Cys-380, which acts as the Nucleophile; for glutamine hydrolysis. Residues Phe-381–Gln-384, Glu-404, and Arg-469 contribute to the L-glutamine site. Active-site residues include His-514 and Glu-516.

This sequence belongs to the CTP synthase family. In terms of assembly, homotetramer.

It carries out the reaction UTP + L-glutamine + ATP + H2O = CTP + L-glutamate + ADP + phosphate + 2 H(+). The enzyme catalyses L-glutamine + H2O = L-glutamate + NH4(+). It catalyses the reaction UTP + NH4(+) + ATP = CTP + ADP + phosphate + 2 H(+). It functions in the pathway pyrimidine metabolism; CTP biosynthesis via de novo pathway; CTP from UDP: step 2/2. Allosterically activated by GTP, when glutamine is the substrate; GTP has no effect on the reaction when ammonia is the substrate. The allosteric effector GTP functions by stabilizing the protein conformation that binds the tetrahedral intermediate(s) formed during glutamine hydrolysis. Inhibited by the product CTP, via allosteric rather than competitive inhibition. Functionally, catalyzes the ATP-dependent amination of UTP to CTP with either L-glutamine or ammonia as the source of nitrogen. Regulates intracellular CTP levels through interactions with the four ribonucleotide triphosphates. In Brucella abortus (strain 2308), this protein is CTP synthase.